A 94-amino-acid chain; its full sequence is Integration host factor subunit beta (94 aa).

Belongs to the bacterial histone-like protein family. Heterodimer of an alpha and a beta chain.

This protein is one of the two subunits of integration host factor, a specific DNA-binding protein that functions in genetic recombination as well as in transcriptional and translational control. The chain is Integration host factor subunit beta from Escherichia coli (strain UTI89 / UPEC).